Consider the following 85-residue polypeptide: Large ribosomal subunit protein bL27 (85 aa).

A disordered region spans residues 1 to 20 (MAHKKAGGSTRNGRDSEAKR).

The protein belongs to the bacterial ribosomal protein bL27 family.

This is Large ribosomal subunit protein bL27 from Salmonella agona (strain SL483).